The following is a 442-amino-acid chain: Tol-Pal system protein TolB (442 aa).

The signal sequence occupies residues 1 to 26; the sequence is MRHRSCFSLFAGLALVFCLAVGTAAA.

Belongs to the TolB family. The Tol-Pal system is composed of five core proteins: the inner membrane proteins TolA, TolQ and TolR, the periplasmic protein TolB and the outer membrane protein Pal. They form a network linking the inner and outer membranes and the peptidoglycan layer.

The protein localises to the periplasm. Part of the Tol-Pal system, which plays a role in outer membrane invagination during cell division and is important for maintaining outer membrane integrity. This chain is Tol-Pal system protein TolB, found in Nitratidesulfovibrio vulgaris (strain ATCC 29579 / DSM 644 / CCUG 34227 / NCIMB 8303 / VKM B-1760 / Hildenborough) (Desulfovibrio vulgaris).